The sequence spans 330 residues: Dof zinc finger protein DOF2.4 (330 aa).

The span at 14–25 shows a compositional bias: polar residues; the sequence is NWQQAPPSNYNH. The interval 14 to 70 is disordered; it reads NWQQAPPSNYNHDGTGASANGGHVLRPQLQPQQQPQQQPHPNGSGGGGGGGGGSIRA. Over residues 40–55 the composition is skewed to low complexity; sequence PQLQPQQQPQQQPHPN. The span at 56-68 shows a compositional bias: gly residues; sequence GSGGGGGGGGGSI. Residues 89–143 form a Dof-type zinc finger; that stretch reads LKCPRCESTNTKFCYFNNYSLTQPRHFCKTCRRYWTRGGALRNVPVGGGCRRNRR. Cys91, Cys94, Cys116, and Cys119 together coordinate Zn(2+). 2 disordered regions span residues 133–165 and 255–276; these read PVGG…SFSS and QQSS…SANG. A compositionally biased stretch (low complexity) spans 146–165; that stretch reads SNSNNNNNSTATSNNTSFSS. Residues 265-276 show a composition bias toward polar residues; sequence EDSSNPNPSANG.

In terms of tissue distribution, specific to the vascular tissues. The PEAR proteins (e.g. DOF2.4, DOF5.1, DOF3.2, DOF1.1, DOF5.6 and DOF5.3) form a short-range concentration gradient that peaks at protophloem sieve elements (PSE).

It localises to the nucleus. It is found in the symplast. Functionally, transcription factor that binds specifically to a 5'-AA[AG]G-3' consensus core sequence. Probably involved in early processes for vascular development. The PEAR proteins (e.g. DOF2.4, DOF5.1, DOF3.2, DOF1.1, DOF5.6 and DOF5.3) activate gene expression that promotes radial growth of protophloem sieve elements. Triggers the transcription of HD-ZIP III genes, especially in the central domain of vascular tissue. The sequence is that of Dof zinc finger protein DOF2.4 from Arabidopsis thaliana (Mouse-ear cress).